Here is a 260-residue protein sequence, read N- to C-terminus: ProSAAS (260 aa).

The N-terminal stretch at methionine 1 to serine 33 is a signal peptide. A proSAAS(1-180) region spans residues alanine 34–proline 215. 2 disordered regions span residues alanine 162 to threonine 187 and serine 206 to asparagine 234. The interval alanine 221 to proline 260 is C-terminal inhibitory domain; interacts with PCSK1. The Sufficient for inhibition of PCSK1 signature appears at leucine 239–arginine 244.

Interacts via the C-terminal inhibitory domain with PCSK1 65 kDa form. Proteolytically cleaved in the Golgi. Big SAAS, Little SAAS, PEN and Big LEN are the major processed peptides in proSAAS-overexpressing PC-12 phaeochromocytoma cells (lacking PCSK1 and PCSK2 endopeptidases). Peptides corresponding to PEN and a proSAAS aa 40-59 have been detected in wild-type PC-12 cells. In terms of tissue distribution, expressed in adult brain (all major structural regions), adrenal gland (medulla) and spinal cord (dorsal and ventral horn). Expressed in pancreatic islands.

The protein resides in the secreted. The protein localises to the golgi apparatus. It localises to the trans-Golgi network. Functionally, may function in the control of the neuroendocrine secretory pathway. Proposed be a specific endogenous inhibitor of PCSK1. ProSAAS and Big PEN-LEN, both containing the C-terminal inhibitory domain, but not the processed peptides reduce PCSK1 activity in the endoplasmic reticulum and Golgi. It reduces the activity of the 87 kDa form but not the autocatalytically derived 65 kDa form of PCSK1. Subsequent processing of proSAAS may eliminate the inhibition. Slows down convertase-mediated processing of proopiomelanocortin and proenkephalin. May control the intracellular timing of PCSK1 rather than its total level of activity. Endogenous ligand for GPR171. Neuropeptide involved in the regulation of feeding. In Rattus norvegicus (Rat), this protein is ProSAAS (Pcsk1n).